Here is a 313-residue protein sequence, read N- to C-terminus: Olfactory receptor 1M1 (313 aa).

The Extracellular portion of the chain corresponds to 1–25 (MEPQNHTSASEFILLGLSEKPDHDP). Asn-5 carries an N-linked (GlcNAc...) asparagine glycan. Residues 26–46 (VLFSLFLCMYMITVVGNLLII) traverse the membrane as a helical segment. At 47 to 54 (LAISFDSH) the chain is on the cytoplasmic side. Residues 55 to 75 (LHTPMYFFLANLSLVDFCLAT) traverse the membrane as a helical segment. The Extracellular segment spans residues 76–97 (NTVPKMLVNIQTRNKSISYPCC). A glycan (N-linked (GlcNAc...) asparagine) is linked at Asn-89. An intrachain disulfide couples Cys-97 to Cys-179. A helical transmembrane segment spans residues 98-118 (LTQMYFFHFFGIMDSVLIAVM). The Cytoplasmic segment spans residues 119 to 142 (AYDRFVAICHPLHYSTIMSPRLCG). The chain crosses the membrane as a helical span at residues 143–163 (LLVGVPWVYSCFISLTHILLM). Residues 164 to 196 (ARLVFCGKNELPHYFCDLTPLLRLSCTDTTVNK) lie on the Extracellular side of the membrane. Residues 197–217 (IFVLIVAGMVIATPFVCILAS) traverse the membrane as a helical segment. The Cytoplasmic portion of the chain corresponds to 218–244 (YARIIVAIMKVPSAGGRKKAFSTCSSH). A helical membrane pass occupies residues 245 to 265 (LSVVALFYGTTIGVYLCPSSV). Residues 266–274 (RTAVKEKAS) are Extracellular-facing. The helical transmembrane segment at 275–292 (AVMYTAVTPMLNPFIYSL) threads the bilayer. The Cytoplasmic portion of the chain corresponds to 293-313 (RNRDLKGALKKIINRKISTSS).

It belongs to the G-protein coupled receptor 1 family. As to expression, expressed in testis.

It localises to the cell membrane. Its function is as follows. Odorant receptor. The protein is Olfactory receptor 1M1 of Mus musculus (Mouse).